Consider the following 437-residue polypeptide: Adenylosuccinate synthetase (437 aa).

GTP-binding positions include 12-18 (GDEGKGK) and 40-42 (GHT). Residue Asp13 is the Proton acceptor of the active site. Positions 13 and 40 each coordinate Mg(2+). Residues 13–16 (DEGK), 38–41 (NAGH), Thr128, Arg142, Gln223, Thr238, and Arg302 contribute to the IMP site. The Proton donor role is filled by His41. The disordered stretch occupies residues 119–138 (QRGERRIGTTGRGIGPTYAD). A substrate-binding site is contributed by 298-304 (TTTGRRR). GTP-binding positions include Arg304, 330-332 (KLD), and 412-414 (SLG).

It belongs to the adenylosuccinate synthetase family. Homodimer. It depends on Mg(2+) as a cofactor.

The protein resides in the cytoplasm. The enzyme catalyses IMP + L-aspartate + GTP = N(6)-(1,2-dicarboxyethyl)-AMP + GDP + phosphate + 2 H(+). The protein operates within purine metabolism; AMP biosynthesis via de novo pathway; AMP from IMP: step 1/2. Plays an important role in the de novo pathway of purine nucleotide biosynthesis. Catalyzes the first committed step in the biosynthesis of AMP from IMP. This Synechococcus sp. (strain WH7803) protein is Adenylosuccinate synthetase.